The following is a 464-amino-acid chain: ATP-dependent protease ATPase subunit HslU (464 aa).

ATP contacts are provided by residues valine 18, 60-65, aspartate 277, glutamate 342, and arginine 414; that span reads GVGKTE.

This sequence belongs to the ClpX chaperone family. HslU subfamily. As to quaternary structure, a double ring-shaped homohexamer of HslV is capped on each side by a ring-shaped HslU homohexamer. The assembly of the HslU/HslV complex is dependent on binding of ATP.

It localises to the cytoplasm. In terms of biological role, ATPase subunit of a proteasome-like degradation complex; this subunit has chaperone activity. The binding of ATP and its subsequent hydrolysis by HslU are essential for unfolding of protein substrates subsequently hydrolyzed by HslV. HslU recognizes the N-terminal part of its protein substrates and unfolds these before they are guided to HslV for hydrolysis. The polypeptide is ATP-dependent protease ATPase subunit HslU (Lactobacillus delbrueckii subsp. bulgaricus (strain ATCC 11842 / DSM 20081 / BCRC 10696 / JCM 1002 / NBRC 13953 / NCIMB 11778 / NCTC 12712 / WDCM 00102 / Lb 14)).